The sequence spans 185 residues: Ribosome-recycling factor (185 aa).

It belongs to the RRF family.

It is found in the cytoplasm. Responsible for the release of ribosomes from messenger RNA at the termination of protein biosynthesis. May increase the efficiency of translation by recycling ribosomes from one round of translation to another. This Mycobacteroides abscessus (strain ATCC 19977 / DSM 44196 / CCUG 20993 / CIP 104536 / JCM 13569 / NCTC 13031 / TMC 1543 / L948) (Mycobacterium abscessus) protein is Ribosome-recycling factor.